Consider the following 334-residue polypeptide: G-protein coupled receptor 12 (334 aa).

The Extracellular portion of the chain corresponds to 1-48; the sequence is MNEDPKVNLSGLPRDCIEAGTPENISAAVPSQGSVVESEPELVVNPWD. N-linked (GlcNAc...) asparagine glycosylation is found at N8 and N24. The helical transmembrane segment at 49–69 threads the bilayer; sequence IVLCSSGTLICCENAVVVLII. Residues 70–78 are Cytoplasmic-facing; the sequence is FHSPSLRAP. Residues 79–99 form a helical membrane-spanning segment; it reads MFLLIGSLALADLLAGLGLII. Residues 100–113 are Extracellular-facing; that stretch reads NFVFAYLLQSEATK. Residues 114-134 form a helical membrane-spanning segment; the sequence is LVTIGLIVASFSASVCSLLAI. At 135–158 the chain is on the cytoplasmic side; the sequence is TVDRYLSLYYALTYHSERTVTFTY. Residues 159 to 179 traverse the membrane as a helical segment; the sequence is VMLVMLWGTSTCLGLLPVMGW. The Extracellular portion of the chain corresponds to 180 to 199; that stretch reads NCLRDESTCSVVRPLTKNNA. A helical membrane pass occupies residues 200–220; the sequence is AILSISFLFMFALMLQLYIQI. Residues 221–252 lie on the Cytoplasmic side of the membrane; that stretch reads CKIVMRHAHQIALQHHFLATSHYVTTRKGIST. The helical transmembrane segment at 253–273 threads the bilayer; sequence LALILGTFAACWMPFTLYSLI. The Extracellular portion of the chain corresponds to 274–282; sequence ADYTYPSIY. A helical transmembrane segment spans residues 283-303; sequence TYATLLPATYNSIINPVIYAF. The Cytoplasmic portion of the chain corresponds to 304–334; sequence RNQEIQKALCLICCGCIPNTLSQRARSPSDV. C317 is lipidated: S-palmitoyl cysteine. 2 positions are modified to phosphoserine: S330 and S332.

It belongs to the G-protein coupled receptor 1 family. Expressed in the brain, pituitary gland and testis.

It localises to the cell membrane. Functionally, receptor with constitutive G(s) signaling activity that activates cyclic AMP. Promotes neurite outgrowth and blocks myelin inhibition in neurons. This chain is G-protein coupled receptor 12 (Gpr12), found in Rattus norvegicus (Rat).